The following is a 533-amino-acid chain: UDP-glucuronosyltransferase 1-2 (533 aa).

Residues 1–27 (MDTGLCVPLRGISGLLLLLCALPWAEG) form the signal peptide. N141, N295, and N433 each carry an N-linked (GlcNAc...) asparagine glycan. Residues 491–511 (VIGFLLAIVLTVVFIVFKCCA) form a helical membrane-spanning segment.

It belongs to the UDP-glycosyltransferase family. As to expression, expressed in kidney.

The protein resides in the microsome. It localises to the endoplasmic reticulum membrane. The catalysed reaction is glucuronate acceptor + UDP-alpha-D-glucuronate = acceptor beta-D-glucuronoside + UDP + H(+). UDPGT is of major importance in the conjugation and subsequent elimination of potentially toxic xenobiotics and endogenous compounds. This is UDP-glucuronosyltransferase 1-2 (Ugt1a2) from Mus musculus (Mouse).